The primary structure comprises 485 residues: Glycogen synthase (485 aa).

An ADP-alpha-D-glucose-binding site is contributed by lysine 20.

The protein belongs to the glycosyltransferase 1 family. Bacterial/plant glycogen synthase subfamily.

The enzyme catalyses [(1-&gt;4)-alpha-D-glucosyl](n) + ADP-alpha-D-glucose = [(1-&gt;4)-alpha-D-glucosyl](n+1) + ADP + H(+). It functions in the pathway glycan biosynthesis; glycogen biosynthesis. Its function is as follows. Synthesizes alpha-1,4-glucan chains using ADP-glucose. In Vibrio parahaemolyticus serotype O3:K6 (strain RIMD 2210633), this protein is Glycogen synthase.